Reading from the N-terminus, the 156-residue chain is Small ribosomal subunit protein uS7 (156 aa).

It belongs to the universal ribosomal protein uS7 family. As to quaternary structure, part of the 30S ribosomal subunit. Contacts proteins S9 and S11.

Functionally, one of the primary rRNA binding proteins, it binds directly to 16S rRNA where it nucleates assembly of the head domain of the 30S subunit. Is located at the subunit interface close to the decoding center, probably blocks exit of the E-site tRNA. The protein is Small ribosomal subunit protein uS7 of Acidobacterium capsulatum (strain ATCC 51196 / DSM 11244 / BCRC 80197 / JCM 7670 / NBRC 15755 / NCIMB 13165 / 161).